Reading from the N-terminus, the 1008-residue chain is MAEEKMMRLSQVAKKLNVGTSTIIDHLSAKGYDIENNPNAKITVDMYAFLSKEYESSAQVKKEAESLTIGKKHMGDVVIDADQVNVAPEHDEEDEVRIINNSPAEAVVPEVPAVTAQEAPKTAPTAESPEDVKGNVTLQGLKVLGKIDLGTADKDSKKSAKNTKPVEKVAAEKPIEKAKPETVAPPVEPKPEPKQETPKTEQPVKKETPKAETQKPPVADKPAEKTPVVEEPAAPVADVPVQVVQAHADKLQGLTVLGKIQLPDKKKEPTRVASSDEVVDKNKNKRKRKRLNDGPNKPAGANPNGPRPAGSNPNGPRPQGTNPNGPRPQGQGGNPNGPRPAGGPNRPGVPNRPNSNGPKPTLTKASEKGEVTGKQIQDKIKATMAKLSGGGTKSGPVNRAKYRKDKRSAMADAEEERLMAEQEDAKSLKVAEFISASDLASLMDVSINEVISKCMAMGMFVSINQRLDAEAITIIADEFGYDVNFQTTGEEDDVTDVDQDDPASLIDRAPIVTIMGHVDHGKTSLLDYIRKSKVVAGEAGGITQHIGAYNVMTDSGKPITFLDTPGHEAFTAMRARGAKITDIVIIVVAADDSVMPQTKEAINHARVAGVPIIIAINKIDKPAANPDKIKEELSKENILVEDWGGKYQCQAISAKAGTGISELLDKVLLEAEMLELKANPDKRAIGAVIEASLDKGRGYVTNVLVEAGTLRIGDIILAGAHFGRVKAMVDHTGKKLKEAGPAMPLQVLGLNGAPQAGDKFQVMETEREAREISSKREQLLREQSIRTKKHITLDEIGRRLAIGNFKELNIIVKADVDGSVEALSDSLLKLSTEEIQIRILHKGVGQISESDILLASASDAIIVAFQVRPSTSARKLAEQEQIEIRMYSIIYDAINEVKDAMEGMLEPKMEEVVLGTIDVRDVFKITKVGTVAGAYVSEGIVKRNNQVRLIRDGIVMFTGTISALKRFKDDVSEVKTSYECGISLKGYNDIQIGDQIEAFEQKEVKRTL.

Disordered regions lie at residues 113–136 (AVTA…KGNV), 153–235 (DKDS…PAAP), and 253–405 (GLTV…YRKD). Composition is skewed to basic and acidic residues over residues 153–180 (DKDS…KAKP) and 189–213 (PKPE…KAET). Low complexity-rich tracts occupy residues 294 to 329 (GPNK…PRPQ) and 342 to 358 (GGPN…SNGP). Over residues 365–381 (ASEKGEVTGKQIQDKIK) the composition is skewed to basic and acidic residues. A tr-type G domain is found at 507 to 677 (DRAPIVTIMG…LLEAEMLELK (171 aa)). Residues 516–523 (GHVDHGKT) are G1. 516-523 (GHVDHGKT) contributes to the GTP binding site. Residues 541–545 (GITQH) form a G2 region. A G3 region spans residues 563-566 (DTPG). GTP is bound by residues 563 to 567 (DTPGH) and 617 to 620 (NKID). The tract at residues 617-620 (NKID) is G4. The segment at 653–655 (SAK) is G5.

It belongs to the TRAFAC class translation factor GTPase superfamily. Classic translation factor GTPase family. IF-2 subfamily.

It is found in the cytoplasm. Functionally, one of the essential components for the initiation of protein synthesis. Protects formylmethionyl-tRNA from spontaneous hydrolysis and promotes its binding to the 30S ribosomal subunits. Also involved in the hydrolysis of GTP during the formation of the 70S ribosomal complex. The sequence is that of Translation initiation factor IF-2 from Cytophaga hutchinsonii (strain ATCC 33406 / DSM 1761 / CIP 103989 / NBRC 15051 / NCIMB 9469 / D465).